We begin with the raw amino-acid sequence, 435 residues long: MSDFSPREIVSELDRHIVGQANAKRAVAIALRNRWRRQQLDDKLREEVLPKNILMIGPTGVGKTEISRRLARLAGAPFLKVEATKFTEVGYVGRDVEQIVRDLVEVGIGLVREARRKDVQAKAHLAAENRVLDALVGATASPATRDAFRKRLRAGELDDKEVEIEVQAGGQGMPMFEIPGMPGTQMGAVNLGDMLGKAFGGRSKPRRVNVKEAHPLLLAEEADKLIDQDAIVQDAIHQVENNGIVFLDEIDKIAGREGRSGADVSREGVQRDLLPLIEGTTVSTKHGPVKTDHILFIASGAFHVSKPSDLLPELQGRLPIRVELEALTRADFVRILTETEASLVKQSVALMGTEGVTLTITTDAVEAIADAAVEVNSNVENIGARRLQTVIERVLDDLSFSAPDRSGETVVVDAEYVRSRVADLARNADLSRFIL.

ATP contacts are provided by residues Val-18, Gly-60–Glu-65, Asp-248, Glu-313, and Arg-385.

This sequence belongs to the ClpX chaperone family. HslU subfamily. As to quaternary structure, a double ring-shaped homohexamer of HslV is capped on each side by a ring-shaped HslU homohexamer. The assembly of the HslU/HslV complex is dependent on binding of ATP.

The protein resides in the cytoplasm. Its function is as follows. ATPase subunit of a proteasome-like degradation complex; this subunit has chaperone activity. The binding of ATP and its subsequent hydrolysis by HslU are essential for unfolding of protein substrates subsequently hydrolyzed by HslV. HslU recognizes the N-terminal part of its protein substrates and unfolds these before they are guided to HslV for hydrolysis. This Xanthobacter autotrophicus (strain ATCC BAA-1158 / Py2) protein is ATP-dependent protease ATPase subunit HslU.